Here is a 205-residue protein sequence, read N- to C-terminus: Protein-L-isoaspartate O-methyltransferase (205 aa).

Serine 52 is a catalytic residue.

The protein belongs to the methyltransferase superfamily. L-isoaspartyl/D-aspartyl protein methyltransferase family.

The protein localises to the cytoplasm. The enzyme catalyses [protein]-L-isoaspartate + S-adenosyl-L-methionine = [protein]-L-isoaspartate alpha-methyl ester + S-adenosyl-L-homocysteine. In terms of biological role, catalyzes the methyl esterification of L-isoaspartyl residues in peptides and proteins that result from spontaneous decomposition of normal L-aspartyl and L-asparaginyl residues. It plays a role in the repair and/or degradation of damaged proteins. The protein is Protein-L-isoaspartate O-methyltransferase of Gloeobacter violaceus (strain ATCC 29082 / PCC 7421).